A 157-amino-acid polypeptide reads, in one-letter code: Protein UXT (157 aa).

Belongs to the UXT family. In terms of assembly, homohexamer. Component of the PAQosome complex which is responsible for the biogenesis of several protein complexes and which consists of R2TP complex members RUVBL1, RUVBL2, RPAP3 and PIH1D1, URI complex members PFDN2, PFDN6, PDRG1, UXT and URI1 as well as ASDURF, POLR2E and DNAAF10/WDR92. Interacts with LRPPRC. Interacts with androgen receptor AR (via N-terminus). Interacts with estrogen receptor ESR1; the interaction relocalizes ESR1 to the cytoplasm. In the nucleus, interacts specifically with RELA (via RHD domain) and forms a dynamic complex with NF-kappa-B and is recruited to the NF-kappa-B enhanceosome upon stimulation. Interacts with MECOM. Interacts with URI1.

It is found in the cytoplasm. It localises to the nucleus. The protein resides in the cytoskeleton. Its subcellular location is the microtubule organizing center. The protein localises to the centrosome. It is found in the spindle pole. Its function is as follows. Involved in gene transcription regulation. Acts in concert with the corepressor URI1 to regulate androgen receptor AR-mediated transcription. Together with URI1, associates with chromatin to the NKX3-1 promoter region. Negatively regulates the transcriptional activity of the estrogen receptor ESR1 by inducing its translocation into the cytoplasm. May act as nuclear chaperone that facilitates the formation of the NF-kappa-B enhanceosome and thus positively regulates NF-kappa-B transcription activity. Potential component of mitochondrial-associated LRPPRC, a multidomain organizer that potentially integrates mitochondria and the microtubular cytoskeleton with chromosome remodeling. Increasing concentrations of UXT contributes to progressive aggregation of mitochondria and cell death potentially through its association with LRPPRC. Suppresses cell transformation and it might mediate this function by interaction and inhibition of the biological activity of cell proliferation and survival stimulatory factors like MECOM. The chain is Protein UXT (Uxt) from Rattus norvegicus (Rat).